Consider the following 359-residue polypeptide: Dihydroorotate dehydrogenase (quinone) (359 aa).

FMN is bound by residues 61-65 (AGYDK) and T85. Residue K65 coordinates substrate. 110 to 114 (NRLGF) lines the substrate pocket. FMN-binding residues include N139 and N170. N170 is a substrate binding site. S173 (nucleophile) is an active-site residue. N175 contacts substrate. FMN contacts are provided by K211 and S239. 240–241 (NT) contacts substrate. Residues G262, G291, and 312 to 313 (YT) contribute to the FMN site.

This sequence belongs to the dihydroorotate dehydrogenase family. Type 2 subfamily. In terms of assembly, monomer. Requires FMN as cofactor.

The protein localises to the cell membrane. It catalyses the reaction (S)-dihydroorotate + a quinone = orotate + a quinol. It participates in pyrimidine metabolism; UMP biosynthesis via de novo pathway; orotate from (S)-dihydroorotate (quinone route): step 1/1. In terms of biological role, catalyzes the conversion of dihydroorotate to orotate with quinone as electron acceptor. The polypeptide is Dihydroorotate dehydrogenase (quinone) (Mesorhizobium japonicum (strain LMG 29417 / CECT 9101 / MAFF 303099) (Mesorhizobium loti (strain MAFF 303099))).